A 467-amino-acid polypeptide reads, in one-letter code: tRNA dimethylallyltransferase (467 aa).

Residues 1 to 47 (MASVAAARAVPVGSGLRGLQRTLPLVVILGATGTGKSTLALQLGQRL) constitute a mitochondrion transit peptide. Residue 32 to 37 (TGTGKS) coordinates dimethylallyl diphosphate. Interaction with substrate tRNA stretches follow at residues 55–58 (DSMQ) and 183–187 (RKVAR). The tract at residues 221 to 230 (FSNPCILWLH) is core aggregation region. The tract at residues 233-255 (QAVLDERLDKRVDDMLAAGLLEE) is interaction with isopentenylpyrophosphate transferase. Interaction with substrate tRNA stretches follow at residues 281–283 (QSI) and 313–331 (ALKQVTKRYARKQNRWVKN). A Matrin-type zinc finger spans residues 395 to 425 (HLCDLCDRIIIGDREWAAHIKSKSHLNQLKK). The disordered stretch occupies residues 429 to 467 (LDSDAVNTIESQSVSPDHNKEPKEKGSPGQNDQELKCSV). Over residues 433 to 444 (AVNTIESQSVSP) the composition is skewed to polar residues. A Phosphoserine modification is found at serine 443. A compositionally biased stretch (basic and acidic residues) spans 445–454 (DHNKEPKEKG). At serine 455 the chain carries Phosphoserine.

It belongs to the IPP transferase family.

The protein localises to the mitochondrion. It is found in the cytoplasm. It carries out the reaction adenosine(37) in tRNA + dimethylallyl diphosphate = N(6)-dimethylallyladenosine(37) in tRNA + diphosphate. In terms of biological role, catalyzes the transfer of a dimethylallyl group onto the adenine at position 37 of both cytosolic and mitochondrial tRNAs, leading to the formation of N6-(dimethylallyl)adenosine (i6A37). Mediates modification of a limited subset of tRNAs: tRNA(Ser)(AGA), tRNA(Ser)(CGA), tRNA(Ser)(UGA), as well as partial modification of the selenocysteine tRNA(Ser)(UCA). TRIT1 is therefore required for selenoprotein expression. The sequence is that of tRNA dimethylallyltransferase (TRIT1) from Homo sapiens (Human).